We begin with the raw amino-acid sequence, 75 residues long: uncharacterized protein (75 aa).

Positions 1 to 26 (MQFLERHFSVLFPVLFFFSFYPISFA) are cleaved as a signal peptide.

It localises to the secreted. This is an uncharacterized protein from Schizosaccharomyces pombe (strain 972 / ATCC 24843) (Fission yeast).